Here is a 545-residue protein sequence, read N- to C-terminus: MTESIKKILVTCALPYANGPIHLGHMLEHIQADIWVRYQRMRGHEVYFICADDAHGTAIMLKAEKSGINPEKMIEEINQQHQNDFSGFLISYDHYYSTHSDENRELSVAIYQRLKAKGHIKKRAISQLYDPEKKLFLPDRFVKGTCPKCQAPNQYGDNCEACGSTYSSTELIAPKSEVSGATPVIRESEHFFFDLPAFTGMLTQWIHSGALQEQVANKMQTWLTSGLRQWDITRDTPYFGFEIPDAPDKYFYVWLDAPIGYMGSFKNFCDKKENVSFDEFWQTDTKTELYHFIGKDIVYFHSLFWPAVLEGSDFRKPTNLFVHGYITVNGAKMSKSRGTFIEASDYLKHLDPDCLRYYYAAKLSSHIDDIDLNLEDFVQRVNADLVNKVVNLAARNASFINKKFAGILSKELADSELYFTFVQAGLRIANAYHARETSKAIREIMALADLANRYVDEQAPWVLAKKEVDEAKLQSVCSMGIHLFRILMTYLKPVLPALSERSEAFLNTELTWDSINEPLLNHEIKPFKALFNRIDNDKIVAMLKC.

Residues 15–25 carry the 'HIGH' region motif; sequence PYANGPIHLGH. Zn(2+) contacts are provided by Cys-146, Cys-149, Cys-159, and Cys-162. The 'KMSKS' region signature appears at 332–336; the sequence is KMSKS. Lys-335 contributes to the ATP binding site.

Belongs to the class-I aminoacyl-tRNA synthetase family. MetG type 1 subfamily. In terms of assembly, monomer. Requires Zn(2+) as cofactor.

It localises to the cytoplasm. The enzyme catalyses tRNA(Met) + L-methionine + ATP = L-methionyl-tRNA(Met) + AMP + diphosphate. Functionally, is required not only for elongation of protein synthesis but also for the initiation of all mRNA translation through initiator tRNA(fMet) aminoacylation. The chain is Methionine--tRNA ligase from Hamiltonella defensa subsp. Acyrthosiphon pisum (strain 5AT).